Here is a 321-residue protein sequence, read N- to C-terminus: MKIILAIASLLVLSAVYARPASIKTFEEFKKAFNKTYATPEKEEVARKNFLESLKYVESNKGAINHLSDLSLDEFKNQFLMNANAFEQLKTQFDLNAETYACSINSVSLPSELDLRSLRTVTPIRMQGGCGSCWAFSGVASTESAYLAYRNMSLDLAEQELVDCASQNGCHGDTIPRGIEYIQQNGVVQEHYYPYVAREQSCHRPNAQRYGLKNYCQISPPDSNKIRQALTQTHTAVAVIIGIKDLNAFRHYDGRTIMQHDNGYQPNYHAVNIVGYGNTQGVDYWIVRNSWDTTWGDNGYGYFAANINLMMIEQYPYVVML.

Residues 1–18 (MKIILAIASLLVLSAVYA) form the signal peptide. A propeptide spanning residues 19–98 (RPASIKTFEE…LKTQFDLNAE (80 aa)) is cleaved from the precursor. The N-linked (GlcNAc...) asparagine glycan is linked to Asn34. Cys130 and Cys170 form a disulfide bridge. Residue Cys133 is part of the active site. N-linked (GlcNAc...) asparagine glycosylation is present at Asn151. Active-site residues include His269 and Asn289.

The protein belongs to the peptidase C1 family.

It localises to the secreted. It catalyses the reaction Broad endopeptidase specificity.. Its function is as follows. Probable thiol protease. This Euroglyphus maynei (Mayne's house dust mite) protein is Peptidase 1 (EURM1).